Reading from the N-terminus, the 196-residue chain is ATP-dependent Clp protease proteolytic subunit (196 aa).

Ser-96 functions as the Nucleophile in the catalytic mechanism. His-121 is an active-site residue.

Belongs to the peptidase S14 family. As to quaternary structure, fourteen ClpP subunits assemble into 2 heptameric rings which stack back to back to give a disk-like structure with a central cavity, resembling the structure of eukaryotic proteasomes.

It is found in the cytoplasm. The catalysed reaction is Hydrolysis of proteins to small peptides in the presence of ATP and magnesium. alpha-casein is the usual test substrate. In the absence of ATP, only oligopeptides shorter than five residues are hydrolyzed (such as succinyl-Leu-Tyr-|-NHMec, and Leu-Tyr-Leu-|-Tyr-Trp, in which cleavage of the -Tyr-|-Leu- and -Tyr-|-Trp bonds also occurs).. In terms of biological role, cleaves peptides in various proteins in a process that requires ATP hydrolysis. Has a chymotrypsin-like activity. Plays a major role in the degradation of misfolded proteins. This Streptococcus agalactiae serotype III (strain NEM316) protein is ATP-dependent Clp protease proteolytic subunit.